Reading from the N-terminus, the 510-residue chain is NAD(P)H-quinone oxidoreductase subunit 2 B, chloroplastic (510 aa).

A run of 13 helical transmembrane segments spans residues 24–44, 57–77, 99–119, 124–144, 149–169, 183–203, 227–247, 295–315, 323–343, 354–374, 395–415, 418–438, and 484–504; these read LLLF…GLIL, IPWL…ALLF, IFQF…VEYI, MAIA…MFLC, LITI…LSGY, YLLM…WLYG, PGIS…LSPA, WHLL…LIAI, MLAY…IVGN, YMLF…LFGL, ALSL…AGFF, LHLF…IGLL, and MIVC…IIAI.

This sequence belongs to the complex I subunit 2 family. In terms of assembly, NDH is composed of at least 16 different subunits, 5 of which are encoded in the nucleus.

It localises to the plastid. It is found in the chloroplast thylakoid membrane. It catalyses the reaction a plastoquinone + NADH + (n+1) H(+)(in) = a plastoquinol + NAD(+) + n H(+)(out). The enzyme catalyses a plastoquinone + NADPH + (n+1) H(+)(in) = a plastoquinol + NADP(+) + n H(+)(out). NDH shuttles electrons from NAD(P)H:plastoquinone, via FMN and iron-sulfur (Fe-S) centers, to quinones in the photosynthetic chain and possibly in a chloroplast respiratory chain. The immediate electron acceptor for the enzyme in this species is believed to be plastoquinone. Couples the redox reaction to proton translocation, and thus conserves the redox energy in a proton gradient. The polypeptide is NAD(P)H-quinone oxidoreductase subunit 2 B, chloroplastic (Gossypium barbadense (Sea Island cotton)).